A 171-amino-acid polypeptide reads, in one-letter code: Myelin basic protein (171 aa).

Residue Ala1 is modified to N-acetylalanine. Ser7 and Ser12 each carry phosphoserine. Tyr14 is subject to Phosphotyrosine. Position 17 is a phosphothreonine (Thr17). Ser19 carries the phosphoserine modification. A Phosphothreonine modification is found at Thr20. Residues Arg25 and Arg31 each carry the citrulline modification. Thr35 is subject to Phosphothreonine. Ser40 carries the post-translational modification Phosphoserine. Omega-N-methylarginine is present on residues Arg43 and Arg49. Residues 44-115 form a disordered region; that stretch reads FFGGDRGAPK…GRGLSLSRFS (72 aa). The residue at position 56 (Ser56) is a Phosphoserine. The residue at position 69 (Tyr69) is a Phosphotyrosine. Phosphoserine is present on Ser76. Residues Thr80, Thr95, and Thr98 each carry the phosphothreonine modification. Gln103 is subject to Deamidated glutamine. At Arg107 the chain carries Omega-N-methylarginine; alternate. Arg107 carries the post-translational modification Symmetric dimethylarginine; alternate. Ser115 bears the Phosphoserine mark. Citrulline occurs at positions 122 and 130. Gln148 carries the post-translational modification Deamidated glutamine. Arg160 bears the Citrulline mark. Ser162 carries the post-translational modification Phosphoserine. Ser166 bears the Phosphoserine; by UHMK1 mark. Arg171 is modified (citrulline).

The protein belongs to the myelin basic protein family. Homodimer. As in other animals, several charge isomers may be produced as a result of optional post-translational modifications, such as phosphorylation of serine or threonine residues, deamidation of glutamine or asparagine residues, citrullination and methylation of arginine residues. In terms of processing, phosphorylated by TAOK2, VRK2, MAPK11, MAPK12, MAPK14 and MINK1. Post-translationally, proteolytically cleaved in B cell lysosomes by cathepsin CTSG which degrades the major immunogenic MBP epitope and prevents the activation of MBP-specific autoreactive T cells.

It localises to the myelin membrane. Functionally, is, with PLP, the most abundant protein component of the myelin membrane in the CNS. Has a role in both the formation and stabilization of this compact multilayer arrangement of bilayers. Each splice variant and charge isomer may have a specialized function in the assembly of an optimized, biochemically functional myelin membrane. In Pan troglodytes (Chimpanzee), this protein is Myelin basic protein (MBP).